Consider the following 382-residue polypeptide: Telomere-binding protein OPG082 (382 aa).

It belongs to the orthopoxvirus OPG082 family.

It is found in the virion. Binds to the hairpin form of the viral telomeric sequence. Might direct genome encapsidation into the virus particle. This chain is Telomere-binding protein OPG082 (OPG082), found in Monkeypox virus.